A 652-amino-acid chain; its full sequence is Acetyl-coenzyme A synthetase (652 aa).

CoA contacts are provided by residues 189–192 (RGGK) and T311. ATP contacts are provided by residues 387-389 (GEP), 411-416 (DTWWQT), D500, and R515. S523 is a CoA binding site. ATP is bound at residue R526. Residues V537, H539, and V542 each coordinate Mg(2+). Residue R584 participates in CoA binding. K609 is subject to N6-acetyllysine.

Belongs to the ATP-dependent AMP-binding enzyme family. The cofactor is Mg(2+). Acetylated. Deacetylation by the SIR2-homolog deacetylase activates the enzyme.

It carries out the reaction acetate + ATP + CoA = acetyl-CoA + AMP + diphosphate. In terms of biological role, catalyzes the conversion of acetate into acetyl-CoA (AcCoA), an essential intermediate at the junction of anabolic and catabolic pathways. AcsA undergoes a two-step reaction. In the first half reaction, AcsA combines acetate with ATP to form acetyl-adenylate (AcAMP) intermediate. In the second half reaction, it can then transfer the acetyl group from AcAMP to the sulfhydryl group of CoA, forming the product AcCoA. This is Acetyl-coenzyme A synthetase from Bartonella henselae (strain ATCC 49882 / DSM 28221 / CCUG 30454 / Houston 1) (Rochalimaea henselae).